Reading from the N-terminus, the 188-residue chain is RNA 2',3'-cyclic phosphodiesterase (188 aa).

The Proton donor role is filled by His42. 2 consecutive short sequence motifs (HXTX) follow at residues 42-45 (HMTL) and 130-133 (HVTI). His130 acts as the Proton acceptor in catalysis.

It belongs to the 2H phosphoesterase superfamily. ThpR family.

The enzyme catalyses a 3'-end 2',3'-cyclophospho-ribonucleotide-RNA + H2O = a 3'-end 2'-phospho-ribonucleotide-RNA + H(+). Functionally, hydrolyzes RNA 2',3'-cyclic phosphodiester to an RNA 2'-phosphomonoester. This Aquifex aeolicus (strain VF5) protein is RNA 2',3'-cyclic phosphodiesterase.